Here is a 317-residue protein sequence, read N- to C-terminus: Beta-ketoacyl-[acyl-carrier-protein] synthase III (317 aa).

Catalysis depends on residues C112 and H244. The ACP-binding stretch occupies residues Q245–R249. N274 is an active-site residue.

Belongs to the thiolase-like superfamily. FabH family. Homodimer.

It localises to the cytoplasm. It carries out the reaction malonyl-[ACP] + acetyl-CoA + H(+) = 3-oxobutanoyl-[ACP] + CO2 + CoA. It functions in the pathway lipid metabolism; fatty acid biosynthesis. Catalyzes the condensation reaction of fatty acid synthesis by the addition to an acyl acceptor of two carbons from malonyl-ACP. Catalyzes the first condensation reaction which initiates fatty acid synthesis and may therefore play a role in governing the total rate of fatty acid production. Possesses both acetoacetyl-ACP synthase and acetyl transacylase activities. Its substrate specificity determines the biosynthesis of branched-chain and/or straight-chain of fatty acids. In Rickettsia bellii (strain OSU 85-389), this protein is Beta-ketoacyl-[acyl-carrier-protein] synthase III.